We begin with the raw amino-acid sequence, 125 residues long: Small ribosomal subunit protein bS6 (125 aa).

Positions 101-125 (PMMKEEKAKNLLAPQSDAAEPTAAA) are disordered.

It belongs to the bacterial ribosomal protein bS6 family.

Functionally, binds together with bS18 to 16S ribosomal RNA. The sequence is that of Small ribosomal subunit protein bS6 from Laribacter hongkongensis (strain HLHK9).